The primary structure comprises 352 residues: MVPQELIEKIKLISPGTELRKALDDIISANFGALIFLVDDPKKYDDIIQGGFWLDTDFSAEKVYELSKMDGAIVLSEDLTRIYYANVHLVPDPTIPTGETGTRHRTAERLAKQTGKVVIAVSRRRNIISLYYKNYKYVVNQVDFLISKVTQAISTLEKYKDNFDKLLSDLEVLELENRVTLADVVRTLMKGVELLRITEETRPYIVELGEEGRLARMQLRELTEDVDDLMVLLIMDYSSDEVDEETAQAILQDFVTRREPSPISISRVLGYDVQQVSQLDDILVSARGYRLLKTAARIPISIGYNVVKMFKTLDQISKASVEDLKKVEGIGEKRAKAISESISSLKHRRTSE.

The DAC domain occupies 3-143 (PQELIEKIKL…NYKYVVNQVD (141 aa)). Residues Gly-71, Leu-89, and 102–106 (TRHRT) each bind ATP.

It belongs to the DisA family. As to quaternary structure, homooctamer. It depends on Mg(2+) as a cofactor.

The enzyme catalyses 2 ATP = 3',3'-c-di-AMP + 2 diphosphate. In terms of biological role, participates in a DNA-damage check-point. DisA forms globular foci that rapidly scan along the chromosomes searching for lesions. Functionally, also has diadenylate cyclase activity, catalyzing the condensation of 2 ATP molecules into cyclic di-AMP (c-di-AMP). c-di-AMP likely acts as a signaling molecule that may couple DNA integrity with a cellular process. The protein is DNA integrity scanning protein DisA of Thermotoga neapolitana (strain ATCC 49049 / DSM 4359 / NBRC 107923 / NS-E).